The primary structure comprises 317 residues: uncharacterized protein (317 aa).

In terms of domain architecture, HTH lysR-type spans 1 to 60 (MKHELSSMKAFVILAESSSFNNAAKLLNITQPALTRRIKKMEEDLHVQLFERTTRKVTLT). A DNA-binding region (H-T-H motif) is located at residues 20 to 40 (FNNAAKLLNITQPALTRRIKK).

It belongs to the LysR transcriptional regulatory family.

This is an uncharacterized protein from Escherichia coli (strain K12).